Consider the following 260-residue polypeptide: uncharacterized protein (260 aa).

Positions 1 to 22 (MGYSKRFALYISILILIVMVAG) are cleaved as a signal peptide. Residue C23 is the site of N-palmitoyl cysteine attachment. C23 carries the S-diacylglycerol cysteine lipid modification.

This sequence belongs to the staphylococcal tandem lipoprotein family.

The protein resides in the cell membrane. This is an uncharacterized protein from Staphylococcus aureus (strain N315).